Consider the following 727-residue polypeptide: Rho-related BTB domain-containing protein 2 (727 aa).

Residues 1–210 (MDSDMDYERP…DNAIRAALIS (210 aa)) form a rho-like region. GTP is bound by residues 21–28 (GDNAVGKT), 84–88 (DTFGD), and 140–143 (CQLD). BTB domains follow at residues 266–442 (ADVI…DENE) and 500–567 (SDVT…TSSP). The tract at residues 304-333 (ELGGPSEPGGTHPEDHQGHSDQHHHHHHHH) is disordered. Basic and acidic residues predominate over residues 315-324 (HPEDHQGHSD). Residues 703–727 (FWNSPSSPSSSAASSSSPSSSSAVV) form a disordered region. The segment covering 706–727 (SPSSPSSSAASSSSPSSSSAVV) has biased composition (low complexity).

The protein belongs to the small GTPase superfamily. Rho family. As to quaternary structure, interacts with HSP90AA1 and HSP90AB1. Forms a complex with CUL3 and RBX1. Interacts (via BTB 1 domain) with CUL3. Interacts with MSI2. Autoubiquitinated by RHOBTB2-CUL3-RBX1 ubiquitin ligase complex. Ubiquitous, with highest levels in neural tissues. Expression is also detected in fetal lung, heart, and brain.

Its function is as follows. Regulator of cell proliferation and apoptosis. It likely functions as a substrate-adapter that recruits key substrates, e.g. MSI2, to CUL3-based ubiquitin ligase complexes for degradation. Required for MSI2 ubiquitination and degradation. This chain is Rho-related BTB domain-containing protein 2 (RHOBTB2), found in Homo sapiens (Human).